We begin with the raw amino-acid sequence, 61 residues long: UPF0434 protein Pfl01_4174 (61 aa).

It belongs to the UPF0434 family.

The chain is UPF0434 protein Pfl01_4174 from Pseudomonas fluorescens (strain Pf0-1).